We begin with the raw amino-acid sequence, 67 residues long: uncharacterized protein (67 aa).

Transmembrane regions (helical) follow at residues 6–26 (GQLWIVFMWVSGVVCGICVLM) and 38–58 (NNIIIIIIIIMMIKIMKIIII).

Its subcellular location is the membrane. This is an uncharacterized protein from Dictyostelium discoideum (Social amoeba).